The following is a 695-amino-acid chain: Threonine--tRNA ligase 1, cytoplasmic (695 aa).

The tract at residues Met1–Pro21 is disordered. The 65-residue stretch at Asp51–Lys115 folds into the TGS domain. Lys215 bears the N6-acetyllysine mark. At Thr218 the chain carries Phosphothreonine. Tyr270 bears the Phosphotyrosine mark. Thr425 is subject to Phosphothreonine.

The protein belongs to the class-II aminoacyl-tRNA synthetase family. In terms of assembly, homodimer. Post-translationally, ISGylated.

Its subcellular location is the cytoplasm. The catalysed reaction is tRNA(Thr) + L-threonine + ATP = L-threonyl-tRNA(Thr) + AMP + diphosphate + H(+). In terms of biological role, catalyzes the attachment of threonine to tRNA(Thr) in a two-step reaction: threonine is first activated by ATP to form Thr-AMP and then transferred to the acceptor end of tRNA(Thr). Also edits incorrectly charged tRNA(Thr) via its editing domain, at the post-transfer stage. The chain is Threonine--tRNA ligase 1, cytoplasmic (Tars1) from Rattus norvegicus (Rat).